Reading from the N-terminus, the 186-residue chain is Elongation factor P (186 aa).

Belongs to the elongation factor P family.

Its subcellular location is the cytoplasm. It functions in the pathway protein biosynthesis; polypeptide chain elongation. Functionally, involved in peptide bond synthesis. Stimulates efficient translation and peptide-bond synthesis on native or reconstituted 70S ribosomes in vitro. Probably functions indirectly by altering the affinity of the ribosome for aminoacyl-tRNA, thus increasing their reactivity as acceptors for peptidyl transferase. The protein is Elongation factor P of Shewanella denitrificans (strain OS217 / ATCC BAA-1090 / DSM 15013).